The chain runs to 362 residues: Chorismate synthase (362 aa).

R46 is an NADP(+) binding site. Residues 122 to 124 (RSS), 238 to 239 (NA), G278, 293 to 297 (KPTPS), and R319 contribute to the FMN site.

It belongs to the chorismate synthase family. As to quaternary structure, homotetramer. The cofactor is FMNH2.

The enzyme catalyses 5-O-(1-carboxyvinyl)-3-phosphoshikimate = chorismate + phosphate. It functions in the pathway metabolic intermediate biosynthesis; chorismate biosynthesis; chorismate from D-erythrose 4-phosphate and phosphoenolpyruvate: step 7/7. Catalyzes the anti-1,4-elimination of the C-3 phosphate and the C-6 proR hydrogen from 5-enolpyruvylshikimate-3-phosphate (EPSP) to yield chorismate, which is the branch point compound that serves as the starting substrate for the three terminal pathways of aromatic amino acid biosynthesis. This reaction introduces a second double bond into the aromatic ring system. This is Chorismate synthase from Campylobacter jejuni subsp. jejuni serotype O:23/36 (strain 81-176).